The following is a 334-amino-acid chain: Tryptophan--tRNA ligase (334 aa).

Residues 11-13 and 19-20 contribute to the ATP site; these read QPS and GN. Positions 12-20 match the 'HIGH' region motif; the sequence is PSGELTIGN. D135 is an L-tryptophan binding site. ATP-binding positions include 147–149, I186, and 195–199; these read GDD and KMSKS. The 'KMSKS' region signature appears at 195–199; it reads KMSKS.

This sequence belongs to the class-I aminoacyl-tRNA synthetase family. In terms of assembly, homodimer.

The protein resides in the cytoplasm. The catalysed reaction is tRNA(Trp) + L-tryptophan + ATP = L-tryptophyl-tRNA(Trp) + AMP + diphosphate + H(+). Catalyzes the attachment of tryptophan to tRNA(Trp). This Haemophilus influenzae (strain ATCC 51907 / DSM 11121 / KW20 / Rd) protein is Tryptophan--tRNA ligase.